A 367-amino-acid polypeptide reads, in one-letter code: Chorismate synthase (367 aa).

Arg48 contributes to the NADP(+) binding site. FMN is bound by residues 125-127 (RSS), 243-244 (NA), Gly283, 298-302 (KPTSS), and Arg324.

Belongs to the chorismate synthase family. As to quaternary structure, homotetramer. FMNH2 serves as cofactor.

The enzyme catalyses 5-O-(1-carboxyvinyl)-3-phosphoshikimate = chorismate + phosphate. It functions in the pathway metabolic intermediate biosynthesis; chorismate biosynthesis; chorismate from D-erythrose 4-phosphate and phosphoenolpyruvate: step 7/7. Catalyzes the anti-1,4-elimination of the C-3 phosphate and the C-6 proR hydrogen from 5-enolpyruvylshikimate-3-phosphate (EPSP) to yield chorismate, which is the branch point compound that serves as the starting substrate for the three terminal pathways of aromatic amino acid biosynthesis. This reaction introduces a second double bond into the aromatic ring system. The protein is Chorismate synthase of Psychrobacter sp. (strain PRwf-1).